Reading from the N-terminus, the 90-residue chain is Probable Fe(2+)-trafficking protein (90 aa).

The protein belongs to the Fe(2+)-trafficking protein family.

Its function is as follows. Could be a mediator in iron transactions between iron acquisition and iron-requiring processes, such as synthesis and/or repair of Fe-S clusters in biosynthetic enzymes. This is Probable Fe(2+)-trafficking protein from Photobacterium profundum (strain SS9).